A 194-amino-acid polypeptide reads, in one-letter code: Probable GTP-binding protein EngB (194 aa).

One can recognise an EngB-type G domain in the interval 22–194 (LFLEVAFAGR…WQELDTMLNP (173 aa)). GTP contacts are provided by residues 30–37 (GRSNVGKS), 57–61 (GCTQL), 75–78 (DLPG), 142–145 (TKAD), and 173–175 (FSS). Positions 37 and 59 each coordinate Mg(2+).

The protein belongs to the TRAFAC class TrmE-Era-EngA-EngB-Septin-like GTPase superfamily. EngB GTPase family. Mg(2+) is required as a cofactor.

Its function is as follows. Necessary for normal cell division and for the maintenance of normal septation. The polypeptide is Probable GTP-binding protein EngB (Desulforapulum autotrophicum (strain ATCC 43914 / DSM 3382 / VKM B-1955 / HRM2) (Desulfobacterium autotrophicum)).